The chain runs to 122 residues: Ribosome-binding factor A (122 aa).

It belongs to the RbfA family. In terms of assembly, monomer. Binds 30S ribosomal subunits, but not 50S ribosomal subunits or 70S ribosomes.

Its subcellular location is the cytoplasm. Its function is as follows. One of several proteins that assist in the late maturation steps of the functional core of the 30S ribosomal subunit. Associates with free 30S ribosomal subunits (but not with 30S subunits that are part of 70S ribosomes or polysomes). Required for efficient processing of 16S rRNA. May interact with the 5'-terminal helix region of 16S rRNA. The polypeptide is Ribosome-binding factor A (Moorella thermoacetica (strain ATCC 39073 / JCM 9320)).